The sequence spans 385 residues: 8-amino-7-oxononanoate synthase (385 aa).

R21 contributes to the substrate binding site. Residue 108–109 (GF) coordinates pyridoxal 5'-phosphate. H133 is a substrate binding site. Positions 179, 207, and 233 each coordinate pyridoxal 5'-phosphate. N6-(pyridoxal phosphate)lysine is present on K236. T352 contacts substrate.

This sequence belongs to the class-II pyridoxal-phosphate-dependent aminotransferase family. BioF subfamily. As to quaternary structure, homodimer. The cofactor is pyridoxal 5'-phosphate.

It catalyses the reaction 6-carboxyhexanoyl-[ACP] + L-alanine + H(+) = (8S)-8-amino-7-oxononanoate + holo-[ACP] + CO2. The protein operates within cofactor biosynthesis; biotin biosynthesis. In terms of biological role, catalyzes the decarboxylative condensation of pimeloyl-[acyl-carrier protein] and L-alanine to produce 8-amino-7-oxononanoate (AON), [acyl-carrier protein], and carbon dioxide. This chain is 8-amino-7-oxononanoate synthase, found in Klebsiella pneumoniae subsp. pneumoniae (strain ATCC 700721 / MGH 78578).